The primary structure comprises 229 residues: Ras-related protein RABA6b (229 aa).

20-27 (GDSAVGKS) contributes to the GTP binding site. Residues 42-50 (SKPTIGVDF) carry the Effector region motif. GTP contacts are provided by residues 68–72 (DTAGQ), 126–129 (NKSD), and 156–157 (SA). Residues Cys-226 and Cys-227 are each lipidated (S-geranylgeranyl cysteine).

Belongs to the small GTPase superfamily. Rab family.

It is found in the cell membrane. Intracellular vesicle trafficking and protein transport. The polypeptide is Ras-related protein RABA6b (RABA6B) (Arabidopsis thaliana (Mouse-ear cress)).